A 427-amino-acid polypeptide reads, in one-letter code: Serine hydroxymethyltransferase (427 aa).

120-122 contributes to the (6S)-5,6,7,8-tetrahydrofolate binding site; that stretch reads GHI. Position 226 is an N6-(pyridoxal phosphate)lysine (K226). Residue E243 coordinates (6S)-5,6,7,8-tetrahydrofolate.

It belongs to the SHMT family. In terms of assembly, homodimer. Requires pyridoxal 5'-phosphate as cofactor.

It is found in the cytoplasm. It participates in amino-acid biosynthesis; glycine biosynthesis; glycine from L-serine: step 1/1. In terms of biological role, catalyzes the reversible interconversion of serine and glycine with a modified folate serving as the one-carbon carrier. Also exhibits a pteridine-independent aldolase activity toward beta-hydroxyamino acids, producing glycine and aldehydes, via a retro-aldol mechanism. The sequence is that of Serine hydroxymethyltransferase from Thermococcus gammatolerans (strain DSM 15229 / JCM 11827 / EJ3).